We begin with the raw amino-acid sequence, 173 residues long: Large ribosomal RNA subunit accumulation protein YceD (173 aa).

Belongs to the DUF177 domain family.

Its function is as follows. Plays a role in synthesis, processing and/or stability of 23S rRNA. The chain is Large ribosomal RNA subunit accumulation protein YceD (yceD) from Escherichia coli O157:H7.